A 260-amino-acid polypeptide reads, in one-letter code: Small ribosomal subunit protein uS2 (260 aa).

This sequence belongs to the universal ribosomal protein uS2 family.

The chain is Small ribosomal subunit protein uS2 from Gluconacetobacter diazotrophicus (strain ATCC 49037 / DSM 5601 / CCUG 37298 / CIP 103539 / LMG 7603 / PAl5).